Here is a 347-residue protein sequence, read N- to C-terminus: Involucrin (347 aa).

2 disordered regions span residues 1–43 (MSQQ…LPAP) and 56–347 (PLED…RRSL). Residues 27 to 36 (ADTQQEQVKQ) are compositionally biased toward polar residues. Low complexity-rich tracts occupy residues 70 to 114 (VPEQ…QQES) and 138 to 161 (DQQQ…QQES). Composition is skewed to basic and acidic residues over residues 164–173 (QELHVDHHQQ) and 212–221 (QELHVDHHQQ). 2 stretches are compositionally biased toward low complexity: residues 222-241 (QQES…QQES) and 265-285 (DQQQ…QQQE). The segment covering 287–341 (QEDHQKAEHLEQEEAQREQQLKGQLEQEKKGVYQHLDQELTKRDEHLEKKGEHCW) has biased composition (basic and acidic residues).

Belongs to the involucrin family. In terms of assembly, directly or indirectly cross-linked to cornifelin (CNFN). In terms of processing, substrate of transglutaminase. Specific glutamines or lysines are cross-linked to keratins, desmoplakin and to inter involucrin molecules. In terms of tissue distribution, keratinocytes of epidermis and other stratified squamous epithelia.

The protein resides in the cytoplasm. In terms of biological role, part of the insoluble cornified cell envelope (CE) of stratified squamous epithelia. In Sus scrofa (Pig), this protein is Involucrin (IVL).